We begin with the raw amino-acid sequence, 240 residues long: Phosphoribosylaminoimidazole-succinocarboxamide synthase (240 aa).

Belongs to the SAICAR synthetase family.

The enzyme catalyses 5-amino-1-(5-phospho-D-ribosyl)imidazole-4-carboxylate + L-aspartate + ATP = (2S)-2-[5-amino-1-(5-phospho-beta-D-ribosyl)imidazole-4-carboxamido]succinate + ADP + phosphate + 2 H(+). Its pathway is purine metabolism; IMP biosynthesis via de novo pathway; 5-amino-1-(5-phospho-D-ribosyl)imidazole-4-carboxamide from 5-amino-1-(5-phospho-D-ribosyl)imidazole-4-carboxylate: step 1/2. This Wolbachia sp. subsp. Brugia malayi (strain TRS) protein is Phosphoribosylaminoimidazole-succinocarboxamide synthase.